Reading from the N-terminus, the 465-residue chain is uncharacterized protein (465 aa).

A compositionally biased stretch (polar residues) spans 87–112 (KTSQQIDSSPPQTPTTSNGSMMTRRQ). Disordered regions lie at residues 87–169 (KTSQ…SYDD) and 201–244 (EGYI…NNIF). Residues 113-139 (NANNAISSNNNTNTNVTNGSSSNTSLN) are compositionally biased toward low complexity. Over residues 141–157 (GDEEQEEEEEEENDEDS) the composition is skewed to acidic residues. Positions 217–244 (NRNNNNNNINKNNNNNINNNNNNNNNIF) are enriched in low complexity.

This is an uncharacterized protein from Dictyostelium discoideum (Social amoeba).